The following is a 415-amino-acid chain: tRNA(Ile2) 2-agmatinylcytidine synthetase TiaS (415 aa).

Belongs to the TiaS family.

Its subcellular location is the cytoplasm. It catalyses the reaction cytidine(34) in tRNA(Ile2) + agmatine + ATP + H2O = 2-agmatinylcytidine(34) in tRNA(Ile2) + AMP + 2 phosphate + 2 H(+). Its function is as follows. ATP-dependent agmatine transferase that catalyzes the formation of 2-agmatinylcytidine (agm2C) at the wobble position (C34) of tRNA(Ile2), converting the codon specificity from AUG to AUA. The chain is tRNA(Ile2) 2-agmatinylcytidine synthetase TiaS from Pyrobaculum neutrophilum (strain DSM 2338 / JCM 9278 / NBRC 100436 / V24Sta) (Thermoproteus neutrophilus).